The following is a 202-amino-acid chain: dTTP/UTP pyrophosphatase (202 aa).

Catalysis depends on D83, which acts as the Proton acceptor.

It belongs to the Maf family. YhdE subfamily. A divalent metal cation is required as a cofactor.

It localises to the cytoplasm. It catalyses the reaction dTTP + H2O = dTMP + diphosphate + H(+). The enzyme catalyses UTP + H2O = UMP + diphosphate + H(+). Nucleoside triphosphate pyrophosphatase that hydrolyzes dTTP and UTP. May have a dual role in cell division arrest and in preventing the incorporation of modified nucleotides into cellular nucleic acids. The chain is dTTP/UTP pyrophosphatase from Polaromonas sp. (strain JS666 / ATCC BAA-500).